The following is a 689-amino-acid chain: DNA ligase (689 aa).

NAD(+)-binding positions include 40-44 (DAEYD), 89-90 (SL), and glutamate 121. Catalysis depends on lysine 123, which acts as the N6-AMP-lysine intermediate. NAD(+) is bound by residues arginine 144, glutamate 179, lysine 295, and lysine 319. Positions 413, 416, 431, and 437 each coordinate Zn(2+). Residues 610–689 (REQSSLTGKI…AEWLTLVRDI (80 aa)) enclose the BRCT domain.

This sequence belongs to the NAD-dependent DNA ligase family. LigA subfamily. The cofactor is Mg(2+). Mn(2+) serves as cofactor.

It catalyses the reaction NAD(+) + (deoxyribonucleotide)n-3'-hydroxyl + 5'-phospho-(deoxyribonucleotide)m = (deoxyribonucleotide)n+m + AMP + beta-nicotinamide D-nucleotide.. In terms of biological role, DNA ligase that catalyzes the formation of phosphodiester linkages between 5'-phosphoryl and 3'-hydroxyl groups in double-stranded DNA using NAD as a coenzyme and as the energy source for the reaction. It is essential for DNA replication and repair of damaged DNA. The polypeptide is DNA ligase (Rickettsia bellii (strain OSU 85-389)).